We begin with the raw amino-acid sequence, 324 residues long: Thiamine thiazole synthase (324 aa).

Substrate-binding positions include C86, 107 to 108 (EA), G115, and V180. Residue C213 is modified to 2,3-didehydroalanine (Cys). Substrate is bound by residues D215, H230, M282, and 292–294 (RMG).

It belongs to the THI4 family. Homooctamer. Requires Fe cation as cofactor. In terms of processing, during the catalytic reaction, a sulfide is transferred from Cys-213 to a reaction intermediate, generating a dehydroalanine residue.

It is found in the cytoplasm. The protein resides in the nucleus. The catalysed reaction is [ADP-thiazole synthase]-L-cysteine + glycine + NAD(+) = [ADP-thiazole synthase]-dehydroalanine + ADP-5-ethyl-4-methylthiazole-2-carboxylate + nicotinamide + 3 H2O + 2 H(+). Functionally, involved in biosynthesis of the thiamine precursor thiazole. Catalyzes the conversion of NAD and glycine to adenosine diphosphate 5-(2-hydroxyethyl)-4-methylthiazole-2-carboxylic acid (ADT), an adenylated thiazole intermediate. The reaction includes an iron-dependent sulfide transfer from a conserved cysteine residue of the protein to a thiazole intermediate. The enzyme can only undergo a single turnover, which suggests it is a suicide enzyme. May have additional roles in adaptation to various stress conditions and in DNA damage tolerance. This is Thiamine thiazole synthase (sti35) from Fusarium solani subsp. phaseoli (Nectria haematococca).